We begin with the raw amino-acid sequence, 435 residues long: tRNA(Ile)-lysidine synthase (435 aa).

An ATP-binding site is contributed by S24 to S29.

This sequence belongs to the tRNA(Ile)-lysidine synthase family.

It is found in the cytoplasm. The catalysed reaction is cytidine(34) in tRNA(Ile2) + L-lysine + ATP = lysidine(34) in tRNA(Ile2) + AMP + diphosphate + H(+). Functionally, ligates lysine onto the cytidine present at position 34 of the AUA codon-specific tRNA(Ile) that contains the anticodon CAU, in an ATP-dependent manner. Cytidine is converted to lysidine, thus changing the amino acid specificity of the tRNA from methionine to isoleucine. The polypeptide is tRNA(Ile)-lysidine synthase (Chromobacterium violaceum (strain ATCC 12472 / DSM 30191 / JCM 1249 / CCUG 213 / NBRC 12614 / NCIMB 9131 / NCTC 9757 / MK)).